The sequence spans 405 residues: L-carnitine CoA-transferase (405 aa).

Residues K97 and R104 each coordinate CoA. D169 functions as the Nucleophile in the catalytic mechanism.

The protein belongs to the CoA-transferase III family. CaiB subfamily. As to quaternary structure, homodimer.

Its subcellular location is the cytoplasm. The enzyme catalyses crotonobetainyl-CoA + (R)-carnitine = crotonobetaine + (R)-carnitinyl-CoA. It carries out the reaction 4-(trimethylamino)butanoyl-CoA + (R)-carnitine = (R)-carnitinyl-CoA + 4-(trimethylamino)butanoate. Its pathway is amine and polyamine metabolism; carnitine metabolism. Functionally, catalyzes the reversible transfer of the CoA moiety from gamma-butyrobetainyl-CoA to L-carnitine to generate L-carnitinyl-CoA and gamma-butyrobetaine. Is also able to catalyze the reversible transfer of the CoA moiety from gamma-butyrobetainyl-CoA or L-carnitinyl-CoA to crotonobetaine to generate crotonobetainyl-CoA. The polypeptide is L-carnitine CoA-transferase (Salmonella enteritidis PT4 (strain P125109)).